A 304-amino-acid chain; its full sequence is L-threonate dehydrogenase (304 aa).

NAD(+) contacts are provided by residues 7–35 (YAVA…TYGV) and threonine 102. The active site involves lysine 178. Lysine 246 is a binding site for NAD(+).

This sequence belongs to the HIBADH-related family. L-threonate dehydrogenase subfamily.

The enzyme catalyses L-threonate + NAD(+) = 2-dehydro-L-erythronate + NADH + H(+). In terms of biological role, catalyzes oxidation of L-threonate to 2-oxo-tetronate. Can use either NAD(+) or NADP(+) as cosubstrate, with a preference for NAD(+). The polypeptide is L-threonate dehydrogenase (Pectobacterium atrosepticum (strain SCRI 1043 / ATCC BAA-672) (Erwinia carotovora subsp. atroseptica)).